A 192-amino-acid chain; its full sequence is MLKKTLAALALGSALLGAGQAMAADYVIDKEGQHAFVNFKISHLGYSWLYGTFRDFDGSFSFDAAKPEASKVKVNLKTASVDSNHAERDKHIRSADFLNVAKHPTATFESTGVKSTGQDTFDITGNLSLNGVTKPVVIAARFIGEGKDPWGGYRAGFEGGTKLKLKDFGIQKDLGPASQEVDLIISVEGVRQ.

Positions 1–23 (MLKKTLAALALGSALLGAGQAMA) are cleaved as a signal peptide.

The protein belongs to the UPF0312 family. Type 1 subfamily.

The protein localises to the periplasm. The chain is UPF0312 protein Avin_03250 from Azotobacter vinelandii (strain DJ / ATCC BAA-1303).